Reading from the N-terminus, the 195-residue chain is Probable nicotinate-nucleotide adenylyltransferase (195 aa).

It belongs to the NadD family.

It carries out the reaction nicotinate beta-D-ribonucleotide + ATP + H(+) = deamido-NAD(+) + diphosphate. Its pathway is cofactor biosynthesis; NAD(+) biosynthesis; deamido-NAD(+) from nicotinate D-ribonucleotide: step 1/1. Functionally, catalyzes the reversible adenylation of nicotinate mononucleotide (NaMN) to nicotinic acid adenine dinucleotide (NaAD). The polypeptide is Probable nicotinate-nucleotide adenylyltransferase (Chlorobaculum parvum (strain DSM 263 / NCIMB 8327) (Chlorobium vibrioforme subsp. thiosulfatophilum)).